A 95-amino-acid polypeptide reads, in one-letter code: MNLKPLADRVIVKPAPAEEKTKGGLFIPDTGKEKPQYGEVVAVGPGKVADNGQLLDMQVTVGKKVLYGKYSGTEVNVEGEDYLIMRESDIFAILD.

The protein belongs to the GroES chaperonin family. In terms of assembly, heptamer of 7 subunits arranged in a ring. Interacts with the chaperonin GroEL.

Its subcellular location is the cytoplasm. Together with the chaperonin GroEL, plays an essential role in assisting protein folding. The GroEL-GroES system forms a nano-cage that allows encapsulation of the non-native substrate proteins and provides a physical environment optimized to promote and accelerate protein folding. GroES binds to the apical surface of the GroEL ring, thereby capping the opening of the GroEL channel. The polypeptide is Co-chaperonin GroES (Chlorobium limicola (strain DSM 245 / NBRC 103803 / 6330)).